The chain runs to 1694 residues: Immunoglobulin A1 protease autotransporter (1694 aa).

A signal peptide spans 1 to 25; sequence MLNKKFKLNFIALTVAYALTPYTEA. The Peptidase S6 domain occupies 26–332; the sequence is ALVRDDVDYQ…NIYKPEFAKT (307 aa). S288 is an active-site residue. A disordered region spans residues 991 to 1403; the sequence is VEKRNQTVDT…GSDRSTVALR (413 aa). Residues 997 to 1021 show a composition bias toward polar residues; sequence TVDTTNITTPNNIQADVPSVPSNNE. Positions 1037–1047 are enriched in low complexity; it reads TPSETTETVAE. A compositionally biased stretch (basic and acidic residues) spans 1049-1061; it reads SKQESKTVEKNEQ. Residues 1082–1095 are compositionally biased toward polar residues; that stretch reads KANTQTNEVAQSGS. Basic and acidic residues-rich tracts occupy residues 1104–1124 and 1142–1154; these read EIKETAKVEKEEKAKVEKDEI and APKEVSTDTKVEE. Composition is skewed to polar residues over residues 1155 to 1178 and 1199 to 1210; these read TQVQAQPQTQSTTVAAAEATSPNS and VSKNQTENTTDQ. Residues 1211–1226 are compositionally biased toward basic and acidic residues; that stretch reads PTEREKTAKVETEKTQ. Composition is skewed to polar residues over residues 1227 to 1247, 1255 to 1297, and 1308 to 1336; these read EPPQVASQASPKQEQSETVQP, NVPT…TAIT, and TETAASTEDASQHKANTVADNSVANNSES. Residues 1352 to 1370 show a composition bias toward low complexity; it reads ETSAEETTAASTDETTIAD. A compositionally biased stretch (basic residues) spans 1374 to 1384; sequence RSKPNRRSRRS. Residues 1442-1694 enclose the Autotransporter domain; it reads NNEGQYNVWV…TAELKLSFSF (253 aa).

It is found in the periplasm. The protein localises to the secreted. It localises to the cell surface. Its subcellular location is the cell outer membrane. The enzyme catalyses Cleavage of immunoglobulin A molecules at certain Pro-|-Xaa bonds in the hinge region. No small molecule substrates are known.. In terms of biological role, virulence factor; cleaves host immunoglobulin A producing intact Fc and Fab fragments. This chain is Immunoglobulin A1 protease autotransporter (iga), found in Haemophilus influenzae (strain ATCC 51907 / DSM 11121 / KW20 / Rd).